The following is a 432-amino-acid chain: Amino-acid acetyltransferase (432 aa).

Residues 286–425 (ELVREAAIED…ASLYNFQRNS (140 aa)) form the N-acetyltransferase domain.

It belongs to the acetyltransferase family. ArgA subfamily.

It localises to the cytoplasm. It catalyses the reaction L-glutamate + acetyl-CoA = N-acetyl-L-glutamate + CoA + H(+). It participates in amino-acid biosynthesis; L-arginine biosynthesis; N(2)-acetyl-L-ornithine from L-glutamate: step 1/4. This chain is Amino-acid acetyltransferase, found in Pseudomonas syringae pv. tomato (strain ATCC BAA-871 / DC3000).